A 463-amino-acid polypeptide reads, in one-letter code: L-seryl-tRNA(Sec) selenium transferase (463 aa).

Position 295 is an N6-(pyridoxal phosphate)lysine (Lys-295).

The protein belongs to the SelA family. Homodecamer; pentamer of dimers. Binds only one seryl-tRNA(Sec) per dimer. It depends on pyridoxal 5'-phosphate as a cofactor.

It localises to the cytoplasm. The catalysed reaction is L-seryl-tRNA(Sec) + selenophosphate + H(+) = L-selenocysteinyl-tRNA(Sec) + phosphate. Its pathway is aminoacyl-tRNA biosynthesis; selenocysteinyl-tRNA(Sec) biosynthesis; selenocysteinyl-tRNA(Sec) from L-seryl-tRNA(Sec) (bacterial route): step 1/1. Its function is as follows. Converts seryl-tRNA(Sec) to selenocysteinyl-tRNA(Sec) required for selenoprotein biosynthesis. In Shigella dysenteriae serotype 1 (strain Sd197), this protein is L-seryl-tRNA(Sec) selenium transferase.